A 200-amino-acid chain; its full sequence is Ribonuclease HII (200 aa).

Residues 9-198 enclose the RNase H type-2 domain; the sequence is ALIAGVDEVG…VQRVLAQAKG (190 aa). Asp15, Glu16, and Asp107 together coordinate a divalent metal cation.

This sequence belongs to the RNase HII family. It depends on Mn(2+) as a cofactor. Mg(2+) serves as cofactor.

The protein resides in the cytoplasm. It carries out the reaction Endonucleolytic cleavage to 5'-phosphomonoester.. Functionally, endonuclease that specifically degrades the RNA of RNA-DNA hybrids. The protein is Ribonuclease HII of Pseudoalteromonas translucida (strain TAC 125).